The chain runs to 20 residues: Unknown protein NF042 from 2D-PAGE (20 aa).

The protein is Unknown protein NF042 from 2D-PAGE of Naegleria fowleri (Brain eating amoeba).